The chain runs to 62 residues: Sec-independent protein translocase protein TatA (62 aa).

Residues 1–21 form a helical membrane-spanning segment; it reads MFGIGIPELLVIFVLILLVFG.

Belongs to the TatA/E family. In terms of assembly, the Tat system comprises two distinct complexes: a TatABC complex, containing multiple copies of TatA, TatB and TatC subunits, and a separate TatA complex, containing only TatA subunits. Substrates initially bind to the TatABC complex, which probably triggers association of the separate TatA complex to form the active translocon.

The protein localises to the cell inner membrane. Functionally, part of the twin-arginine translocation (Tat) system that transports large folded proteins containing a characteristic twin-arginine motif in their signal peptide across membranes. TatA could form the protein-conducting channel of the Tat system. In Oleidesulfovibrio alaskensis (strain ATCC BAA-1058 / DSM 17464 / G20) (Desulfovibrio alaskensis), this protein is Sec-independent protein translocase protein TatA.